The chain runs to 445 residues: Histidinol dehydrogenase (445 aa).

NAD(+) is bound by residues Tyr134, Gln198, and Asn226. Thr249, Gln271, and His274 together coordinate substrate. Positions 271 and 274 each coordinate Zn(2+). Active-site proton acceptor residues include Glu340 and His341. Substrate is bound by residues His341, Asp374, Glu428, and His433. Residue Asp374 participates in Zn(2+) binding. Position 433 (His433) interacts with Zn(2+).

Belongs to the histidinol dehydrogenase family. The cofactor is Zn(2+).

The enzyme catalyses L-histidinol + 2 NAD(+) + H2O = L-histidine + 2 NADH + 3 H(+). It functions in the pathway amino-acid biosynthesis; L-histidine biosynthesis; L-histidine from 5-phospho-alpha-D-ribose 1-diphosphate: step 9/9. Its function is as follows. Catalyzes the sequential NAD-dependent oxidations of L-histidinol to L-histidinaldehyde and then to L-histidine. In Nocardia farcinica (strain IFM 10152), this protein is Histidinol dehydrogenase.